The chain runs to 271 residues: Ribosomal RNA small subunit methyltransferase A (271 aa).

His-11, Leu-13, Gly-38, Glu-58, Asp-86, and Asn-101 together coordinate S-adenosyl-L-methionine.

The protein belongs to the class I-like SAM-binding methyltransferase superfamily. rRNA adenine N(6)-methyltransferase family. RsmA subfamily.

It is found in the cytoplasm. The catalysed reaction is adenosine(1518)/adenosine(1519) in 16S rRNA + 4 S-adenosyl-L-methionine = N(6)-dimethyladenosine(1518)/N(6)-dimethyladenosine(1519) in 16S rRNA + 4 S-adenosyl-L-homocysteine + 4 H(+). In terms of biological role, specifically dimethylates two adjacent adenosines (A1518 and A1519) in the loop of a conserved hairpin near the 3'-end of 16S rRNA in the 30S particle. May play a critical role in biogenesis of 30S subunits. The polypeptide is Ribosomal RNA small subunit methyltransferase A (Helicobacter pylori (strain J99 / ATCC 700824) (Campylobacter pylori J99)).